An 88-amino-acid polypeptide reads, in one-letter code: Platelet factor 4 (88 aa).

O-linked (GalNAc...) threonine glycosylation is present at threonine 7. 2 cysteine pairs are disulfide-bonded: cysteine 25-cysteine 51 and cysteine 27-cysteine 67. Serine 41 carries the post-translational modification Phosphoserine. 76-82 (KKILKKL) provides a ligand contact to heparin.

This sequence belongs to the intercrine alpha (chemokine CxC) family. As to quaternary structure, homotetramer. Interacts with TNFAIP6 (via Link domain). Interacts with CCR1. Interacts with CXCR3. Interacts with THBD; this interaction enhances generation of activated protein C. O-linked glycan consists of Gal-GalNAc disaccharide which is modified with sialic acid residues (microheterogeneity).

Its subcellular location is the secreted. Functionally, chemokine released during platelet aggregation that plays a role in different biological processes including hematopoiesis, cell proliferation, differentiation, and activation. Acts via different functional receptors including CCR1, CXCR3A or CXCR3B. Upon interaction with CXCR3A receptor, induces activated T-lymphocytes migration mediated via downstream Ras/extracellular signal-regulated kinase (ERK) signaling. Neutralizes the anticoagulant effect of heparin by binding more strongly to heparin than to the chondroitin-4-sulfate chains of the carrier molecule. Plays a role in the inhibition of hematopoiesis and in the maintenance of hematopoietic stem cell (HSC) quiescence. Chemotactic for neutrophils and monocytes via CCR1. Inhibits endothelial cell proliferation. In cooperation with toll-like receptor 8/TLR8, induces chromatin remodeling and activates inflammatory gene expression via the TBK1-IRF5 axis. In addition, induces myofibroblast differentiation and collagen synthesis in different precursor cells, including endothelial cells, by stimulating endothelial-to-mesenchymal transition. Interacts with thrombomodulin/THBD to enhance the activation of protein C and thus potentiates its anticoagulant activity. The polypeptide is Platelet factor 4 (PF4) (Bos taurus (Bovine)).